Reading from the N-terminus, the 166-residue chain is RING-H2 finger protein ATL79 (166 aa).

Positions methionine 1 to alanine 16 are cleaved as a signal peptide. Residues serine 41 to isoleucine 61 traverse the membrane as a helical segment. The disordered stretch occupies residues threonine 71–proline 90. Residues alanine 81–proline 90 show a composition bias toward low complexity. Residues cysteine 107–arginine 149 form an RING-type; atypical zinc finger.

It belongs to the RING-type zinc finger family. ATL subfamily.

It is found in the membrane. The enzyme catalyses S-ubiquitinyl-[E2 ubiquitin-conjugating enzyme]-L-cysteine + [acceptor protein]-L-lysine = [E2 ubiquitin-conjugating enzyme]-L-cysteine + N(6)-ubiquitinyl-[acceptor protein]-L-lysine.. The protein operates within protein modification; protein ubiquitination. The chain is RING-H2 finger protein ATL79 (ATL79) from Arabidopsis thaliana (Mouse-ear cress).